The following is a 235-amino-acid chain: Triosephosphate isomerase (235 aa).

A substrate-binding site is contributed by 7–9; that stretch reads NFK. Residue H92 is the Electrophile of the active site. The active-site Proton acceptor is E161. Substrate-binding residues include G167 and S197.

This sequence belongs to the triosephosphate isomerase family. Homodimer.

It is found in the cytoplasm. The catalysed reaction is D-glyceraldehyde 3-phosphate = dihydroxyacetone phosphate. It functions in the pathway carbohydrate biosynthesis; gluconeogenesis. It participates in carbohydrate degradation; glycolysis; D-glyceraldehyde 3-phosphate from glycerone phosphate: step 1/1. Functionally, involved in the gluconeogenesis. Catalyzes stereospecifically the conversion of dihydroxyacetone phosphate (DHAP) to D-glyceraldehyde-3-phosphate (G3P). The protein is Triosephosphate isomerase of Helicobacter hepaticus (strain ATCC 51449 / 3B1).